The following is a 98-amino-acid chain: Integration host factor subunit alpha (98 aa).

This sequence belongs to the bacterial histone-like protein family. As to quaternary structure, heterodimer of an alpha and a beta chain.

In terms of biological role, this protein is one of the two subunits of integration host factor, a specific DNA-binding protein that functions in genetic recombination as well as in transcriptional and translational control. The chain is Integration host factor subunit alpha from Actinobacillus pleuropneumoniae serotype 5b (strain L20).